Consider the following 1056-residue polypeptide: ISWI chromatin-remodeling complex ATPase CHR11 (1056 aa).

The span at 1 to 10 (MARNSNSDEA) shows a compositional bias: low complexity. Disordered regions lie at residues 1–80 (MARN…SKRE) and 133–175 (KSDG…GSGN). Composition is skewed to acidic residues over residues 11 to 32 (FSSEEEEERVKDNEEEDEEELE) and 60 to 73 (PVEDDYEDEEDEEK). Residues 12–105 (SSEEEEERVK…QEMLESQNAS (94 aa)) are a coiled coil. A compositionally biased stretch (basic residues) spans 141 to 151 (KKAKGRGRHAS). The span at 155-169 (EEEEDEEYLKEEEDG) shows a compositional bias: acidic residues. In terms of domain architecture, Helicase ATP-binding spans 201-366 (IRLYENGING…WALLNFLLPE (166 aa)). 214-221 (DEMGLGKT) is a binding site for ATP. A DEAH box motif is present at residues 317–320 (DEAH). In terms of domain architecture, Helicase C-terminal spans 494 to 645 (LLDKLLPKLK…ALVIQQGRLA (152 aa)). 2 disordered regions span residues 738–774 (WNDPPKRERKRNYSESEYFKQTLRQGAPAKPKEPRIP) and 814–833 (IDVEEPEEGGDPLTTEEVEE). Residues 815–833 (DVEEPEEGGDPLTTEEVEE) show a composition bias toward acidic residues. 2 SANT domains span residues 840-892 (EGFS…ERYK) and 941-1002 (QNKG…DTLI). The interval 1011–1056 (EFDERERQARKEKKLAKSATPSKRPLGRQASESPSSTKKRKHLSMR) is disordered. Basic residues predominate over residues 1047 to 1056 (TKKRKHLSMR).

This sequence belongs to the SNF2/RAD54 helicase family. ISWI subfamily. In terms of assembly, interacts with RLT1 and RLT2. Interacts (via C-terminus) with RLT1 (via the DDT domain), RLT2 (via the DDT domain), PTM (via the DDT domain) and DDR4 (via the DDT domain). Binds to FGT1. Highly expressed in growing tissues such as inflorescence and flower meristems, young leaves and floral organs. Expressed in roots, rosette and cauline leaves, stems, flowers, inflorescences and siliques.

Its subcellular location is the nucleus. Its function is as follows. Possesses intrinsic ATP-dependent nucleosome-remodeling activity. Constitutes the catalytic subunit of several complexes capable of forming ordered nucleosome arrays on chromatin. Involved in the formation of nucleosome distribution patterns. Involved in nuclear proliferation during megagametogenesis and cell expansion in the sporophyte. Required for the maintenance of the plant vegetative phase. In association with RLT1 or RLT2 may prevent the early activation of the vegetative-to-reproductive transition by regulating key genes that contribute to flower timing, such as FT, SEP1, SEP3, AGL8/FUL, SOC1 and FLC. Necessary to acquire heat stress (HS) memory. The chain is ISWI chromatin-remodeling complex ATPase CHR11 from Arabidopsis thaliana (Mouse-ear cress).